We begin with the raw amino-acid sequence, 278 residues long: Tryptophan synthase alpha chain (278 aa).

Catalysis depends on proton acceptor residues Glu49 and Asp60.

This sequence belongs to the TrpA family. In terms of assembly, tetramer of two alpha and two beta chains.

It carries out the reaction (1S,2R)-1-C-(indol-3-yl)glycerol 3-phosphate + L-serine = D-glyceraldehyde 3-phosphate + L-tryptophan + H2O. It participates in amino-acid biosynthesis; L-tryptophan biosynthesis; L-tryptophan from chorismate: step 5/5. In terms of biological role, the alpha subunit is responsible for the aldol cleavage of indoleglycerol phosphate to indole and glyceraldehyde 3-phosphate. The chain is Tryptophan synthase alpha chain from Rhodopirellula baltica (strain DSM 10527 / NCIMB 13988 / SH1).